We begin with the raw amino-acid sequence, 667 residues long: UvrABC system protein B (667 aa).

The Helicase ATP-binding domain maps to 31-414; that stretch reads KNFEAGAKAQ…EAEQTDIQVD (384 aa). Residue 44 to 51 coordinates ATP; that stretch reads GATGTGKT. The Beta-hairpin motif lies at 97-120; that stretch reads YYDYYQPEAYVPSSDTYIEKDSSI. Residues 435–597 form the Helicase C-terminal domain; it reads QIDDLVGEIN…ITPKTIIKPI (163 aa). The 36-residue stretch at 630–665 folds into the UVR domain; it reads LEMVERLSEQMRLAAKKLDFEQAATLRDTILELKSE.

It belongs to the UvrB family. In terms of assembly, forms a heterotetramer with UvrA during the search for lesions. Interacts with UvrC in an incision complex.

The protein resides in the cytoplasm. Functionally, the UvrABC repair system catalyzes the recognition and processing of DNA lesions. A damage recognition complex composed of 2 UvrA and 2 UvrB subunits scans DNA for abnormalities. Upon binding of the UvrA(2)B(2) complex to a putative damaged site, the DNA wraps around one UvrB monomer. DNA wrap is dependent on ATP binding by UvrB and probably causes local melting of the DNA helix, facilitating insertion of UvrB beta-hairpin between the DNA strands. Then UvrB probes one DNA strand for the presence of a lesion. If a lesion is found the UvrA subunits dissociate and the UvrB-DNA preincision complex is formed. This complex is subsequently bound by UvrC and the second UvrB is released. If no lesion is found, the DNA wraps around the other UvrB subunit that will check the other stand for damage. This is UvrABC system protein B from Latilactobacillus sakei subsp. sakei (strain 23K) (Lactobacillus sakei subsp. sakei).